The following is a 181-amino-acid chain: Ubiquitin-like protein 4B (181 aa).

The Ubiquitin-like domain occupies 1-76; the sequence is MWLTVKLLLG…LNVIIRPLEK (76 aa). Positions 139-181 are disordered; the sequence is PEGKHSGATGSTRESKGDMEPRRNMKCNLAHKDGFKREKSPGK. Basic and acidic residues-rich tracts occupy residues 151–161 and 168–181; these read RESKGDMEPRR and AHKD…SPGK.

Its subcellular location is the cytoplasm. This chain is Ubiquitin-like protein 4B (UBL4B), found in Monodelphis domestica (Gray short-tailed opossum).